A 284-amino-acid polypeptide reads, in one-letter code: Diaminopimelate epimerase (284 aa).

Positions 20, 53, and 73 each coordinate substrate. Residue cysteine 82 is the Proton donor of the active site. Residues 83 to 84, asparagine 167, asparagine 200, and 218 to 219 each bind substrate; these read GN and ER. Cysteine 227 acts as the Proton acceptor in catalysis. A substrate-binding site is contributed by 228–229; it reads GS.

This sequence belongs to the diaminopimelate epimerase family. As to quaternary structure, homodimer.

It localises to the cytoplasm. It carries out the reaction (2S,6S)-2,6-diaminopimelate = meso-2,6-diaminopimelate. It functions in the pathway amino-acid biosynthesis; L-lysine biosynthesis via DAP pathway; DL-2,6-diaminopimelate from LL-2,6-diaminopimelate: step 1/1. Functionally, catalyzes the stereoinversion of LL-2,6-diaminopimelate (L,L-DAP) to meso-diaminopimelate (meso-DAP), a precursor of L-lysine and an essential component of the bacterial peptidoglycan. This Xanthomonas euvesicatoria pv. vesicatoria (strain 85-10) (Xanthomonas campestris pv. vesicatoria) protein is Diaminopimelate epimerase.